An 897-amino-acid polypeptide reads, in one-letter code: 3'-5' exonuclease DinG (897 aa).

The region spanning 8 to 161 is the Exonuclease domain; that stretch reads VVDLETTGNQ…DEDAATTAKL (154 aa). One can recognise a Helicase ATP-binding domain in the interval 241-496; the sequence is SKAVDQLGLT…KAIDQLEKQR (256 aa). Residue 276–283 coordinates ATP; sequence ASLGSGKS. Residues 448–451 carry the DEAH box motif; the sequence is DEAH. The Helicase C-terminal domain maps to 703-893; sequence NIDEYVASIV…QFGKLLRQIQ (191 aa).

Belongs to the helicase family. DinG subfamily. Type 2 sub-subfamily. Monomer in solution.

With respect to regulation, the nuclease activity is inhibited by ATP or ADP. 3'-5' exonuclease acting on single-stranded DNA (ssDNA) and RNA (ssRNA) substrates. Displays ssDNA-stimulated ATPase activity, but lacks helicase activity. The chain is 3'-5' exonuclease DinG from Staphylococcus aureus (strain MRSA252).